Here is a 355-residue protein sequence, read N- to C-terminus: MIETDKLAAERIIAATPASSHEEVFERALRPRQLDDYVGQEKVRGQLEIFIEAAKRRSEPLDHVLLFGPPGLGKTTLAHIIAREMGVNLRQTSGPVLERAGDLAALLTNLEANDVLFIDEIHRLSPVVEEILYPALEDYQIDIMIGEGPAARSVKLDLQPFTLVGATTRAGMLTNPLRDRFGIVARLEFYDAEQLSRIVRRSAALLNAQIDPNGALEIAKRSRGTPRIANRLLRRVRDYAEVKADGQITAAVADAALAMLDVDPVGFDLMDRKLLEAILHKFDGGPVGIDNLAAAIGEERDTIEDVLEPYLIQQGFLQRTPRGRVATLLTYRHFGLSAPAAGSAEGSMWNTPDGA.

Residues 4–190 (TDKLAAERII…FGIVARLEFY (187 aa)) are large ATPase domain (RuvB-L). ATP is bound by residues leucine 29, arginine 30, glycine 71, lysine 74, threonine 75, threonine 76, 137–139 (EDY), arginine 180, tyrosine 190, and arginine 227. Position 75 (threonine 75) interacts with Mg(2+). Residues 191 to 261 (DAEQLSRIVR…VADAALAMLD (71 aa)) are small ATPAse domain (RuvB-S). The head domain (RuvB-H) stretch occupies residues 264–355 (PVGFDLMDRK…GSMWNTPDGA (92 aa)). DNA contacts are provided by arginine 300, arginine 319, and arginine 324.

It belongs to the RuvB family. As to quaternary structure, homohexamer. Forms an RuvA(8)-RuvB(12)-Holliday junction (HJ) complex. HJ DNA is sandwiched between 2 RuvA tetramers; dsDNA enters through RuvA and exits via RuvB. An RuvB hexamer assembles on each DNA strand where it exits the tetramer. Each RuvB hexamer is contacted by two RuvA subunits (via domain III) on 2 adjacent RuvB subunits; this complex drives branch migration. In the full resolvosome a probable DNA-RuvA(4)-RuvB(12)-RuvC(2) complex forms which resolves the HJ.

The protein localises to the cytoplasm. The enzyme catalyses ATP + H2O = ADP + phosphate + H(+). The RuvA-RuvB-RuvC complex processes Holliday junction (HJ) DNA during genetic recombination and DNA repair, while the RuvA-RuvB complex plays an important role in the rescue of blocked DNA replication forks via replication fork reversal (RFR). RuvA specifically binds to HJ cruciform DNA, conferring on it an open structure. The RuvB hexamer acts as an ATP-dependent pump, pulling dsDNA into and through the RuvAB complex. RuvB forms 2 homohexamers on either side of HJ DNA bound by 1 or 2 RuvA tetramers; 4 subunits per hexamer contact DNA at a time. Coordinated motions by a converter formed by DNA-disengaged RuvB subunits stimulates ATP hydrolysis and nucleotide exchange. Immobilization of the converter enables RuvB to convert the ATP-contained energy into a lever motion, pulling 2 nucleotides of DNA out of the RuvA tetramer per ATP hydrolyzed, thus driving DNA branch migration. The RuvB motors rotate together with the DNA substrate, which together with the progressing nucleotide cycle form the mechanistic basis for DNA recombination by continuous HJ branch migration. Branch migration allows RuvC to scan DNA until it finds its consensus sequence, where it cleaves and resolves cruciform DNA. In Burkholderia vietnamiensis (strain G4 / LMG 22486) (Burkholderia cepacia (strain R1808)), this protein is Holliday junction branch migration complex subunit RuvB.